A 573-amino-acid polypeptide reads, in one-letter code: N(2)-(2-carboxyethyl)arginine synthase (573 aa).

Substrate-binding residues include Tyr-271 and Asp-301. Position 410 to 413 (410 to 413 (IGFF)) interacts with thiamine diphosphate. 414-415 (RH) lines the substrate pocket. 436–438 (SSF) serves as a coordination point for thiamine diphosphate. A Mg(2+)-binding site is contributed by Asp-463. Thiamine diphosphate contacts are provided by residues 464-465 (GG), 490-495 (NDTNGL), and Tyr-561. Mg(2+)-binding residues include Asn-490 and Thr-492. Residue Leu-571 participates in substrate binding.

Homotetramer; dimer of dimers. Mg(2+) serves as cofactor. It depends on thiamine diphosphate as a cofactor.

The enzyme catalyses D-glyceraldehyde 3-phosphate + L-arginine = N(2)-(2-carboxyethyl)-L-arginine + phosphate + H(+). Involved in the biosynthesis of the beta-lactamase inhibitor, clavulanic acid. Catalyzes the thiamine diphosphate (ThDP) dependent condensation of D-glyceraldehyde-3-phosphate (D-G3P) with L-arginine to yield the beta-amino acid, N2-(2-carboxyethyl)arginine (CEA) via a beta-elimination resulting in the formation of an enol which undergoes a second elimination to generate the alpha,beta-unsaturated acryloyl-ThDP. This chain is N(2)-(2-carboxyethyl)arginine synthase, found in Streptomyces clavuligerus.